The following is a 484-amino-acid chain: Replication factor C large subunit (484 aa).

46–53 contributes to the ATP binding site; that stretch reads GPPGSGKT. Residues 463-478 are compositionally biased toward basic and acidic residues; it reads NADTKEKEKKDPKKQA. A disordered region spans residues 463-484; sequence NADTKEKEKKDPKKQATLDSFF.

This sequence belongs to the activator 1 small subunits family. RfcL subfamily. Heteromultimer composed of small subunits (RfcS) and large subunits (RfcL).

Its function is as follows. Part of the RFC clamp loader complex which loads the PCNA sliding clamp onto DNA. This chain is Replication factor C large subunit, found in Methanococcus maripaludis (strain C6 / ATCC BAA-1332).